A 344-amino-acid polypeptide reads, in one-letter code: N-acetyl-gamma-glutamyl-phosphate reductase (344 aa).

Cys-148 is a catalytic residue.

Belongs to the NAGSA dehydrogenase family. Type 1 subfamily.

The protein localises to the cytoplasm. It catalyses the reaction N-acetyl-L-glutamate 5-semialdehyde + phosphate + NADP(+) = N-acetyl-L-glutamyl 5-phosphate + NADPH + H(+). It functions in the pathway amino-acid biosynthesis; L-arginine biosynthesis; N(2)-acetyl-L-ornithine from L-glutamate: step 3/4. Functionally, catalyzes the NADPH-dependent reduction of N-acetyl-5-glutamyl phosphate to yield N-acetyl-L-glutamate 5-semialdehyde. This is N-acetyl-gamma-glutamyl-phosphate reductase from Clostridium botulinum (strain Alaska E43 / Type E3).